The primary structure comprises 155 residues: Endoribonuclease YbeY (155 aa).

The Zn(2+) site is built by His115, His119, and His125.

It belongs to the endoribonuclease YbeY family. It depends on Zn(2+) as a cofactor.

It localises to the cytoplasm. In terms of biological role, single strand-specific metallo-endoribonuclease involved in late-stage 70S ribosome quality control and in maturation of the 3' terminus of the 16S rRNA. This chain is Endoribonuclease YbeY, found in Polynucleobacter asymbioticus (strain DSM 18221 / CIP 109841 / QLW-P1DMWA-1) (Polynucleobacter necessarius subsp. asymbioticus).